The primary structure comprises 586 residues: MTQYEWLQTTLFLVLLLAVVKPMGAFMAKVFQGERTMLSPLLVPCENLLYRICGVNRDEEMDWKRYAVAVLLFNLALFVSLFAILMLQHLLPLNPQKFPAYTWQLALNTAISFVTNTNWQAYSGESAASYFTQTVGLAVHNFVSAATGIAVAIAVIRGFARRRTSMLGNFWVDMTRCTLYVLLPISLIGALILVSQGVIQNFSDYKTVPLVQPITYDKPKADGKGNPVTGRVTVKDITIPMGPVASQEAIKELGTNGGGFFNANSAHPYENPTPISNMVEIFLILLIPFALTSTFGVMVGNTRQGWAILGVMLLMMAISFAVLQGVETSGNPLVAKLGVHGVNMEGKEVRFGLAGASLFTVATTGTSCGAVATMHDSLTPLGGMIPLGLILLGEIAPGGVGSGLYTMLAFVVIAVFVAGLMIGRTPEFLGKKIEVREMWMSIITVLAAGVVVLILSGVAMITPQAVASKANPGAHGLSEVLYAFASMANNNGSAFAGLNANVDFYTILGSLAMLVGRFAPAVAVLAMAGSLAEKKYVPPSLGTLPTDKVPFALWLMLVILIVGALTFFPALSLGPLVEHLTMLGGK.

The next 12 helical transmembrane spans lie at leucine 11 to phenylalanine 31, alanine 67 to leucine 87, glycine 136 to isoleucine 156, leucine 179 to isoleucine 199, valine 279 to valine 299, tryptophan 306 to valine 326, phenylalanine 351 to valine 371, leucine 381 to glycine 401, glycine 403 to glycine 423, isoleucine 442 to threonine 462, isoleucine 507 to methionine 527, and phenylalanine 551 to leucine 571.

This sequence belongs to the KdpA family. The system is composed of three essential subunits: KdpA, KdpB and KdpC.

It is found in the cell inner membrane. Functionally, part of the high-affinity ATP-driven potassium transport (or Kdp) system, which catalyzes the hydrolysis of ATP coupled with the electrogenic transport of potassium into the cytoplasm. This subunit binds the periplasmic potassium ions and delivers the ions to the membrane domain of KdpB through an intramembrane tunnel. This Geobacter metallireducens (strain ATCC 53774 / DSM 7210 / GS-15) protein is Potassium-transporting ATPase potassium-binding subunit.